Consider the following 466-residue polypeptide: Chromosomal replication initiator protein DnaA (466 aa).

Residues 1-77 are domain I, interacts with DnaA modulators; that stretch reads MSQEIWADVL…GAEHPQVEFQ (77 aa). The segment at 77 to 121 is domain II; the sequence is QVLPAAQDALLLPNDPPPAPEAAAPTPKTKAAPTPPPSTPGDNRK. Positions 87–122 are disordered; sequence LLPNDPPPAPEAAAPTPKTKAAPTPPPSTPGDNRKT. Low complexity predominate over residues 97 to 108; that stretch reads EAAAPTPKTKAA. A domain III, AAA+ region region spans residues 122-338; the sequence is TLNPKYTFEN…GALMRVVAFA (217 aa). ATP-binding residues include Gly-166, Gly-168, Lys-169, and Thr-170. The tract at residues 339–466 is domain IV, binds dsDNA; that stretch reads SLNNVPFSRA…GKEEEEEVGA (128 aa).

It belongs to the DnaA family. Oligomerizes as a right-handed, spiral filament on DNA at oriC.

The protein resides in the cytoplasm. In terms of biological role, plays an essential role in the initiation and regulation of chromosomal replication. ATP-DnaA binds to the origin of replication (oriC) to initiate formation of the DNA replication initiation complex once per cell cycle. Binds the DnaA box (a 9 base pair repeat at the origin) and separates the double-stranded (ds)DNA. Forms a right-handed helical filament on oriC DNA; dsDNA binds to the exterior of the filament while single-stranded (ss)DNA is stabiized in the filament's interior. The ATP-DnaA-oriC complex binds and stabilizes one strand of the AT-rich DNA unwinding element (DUE), permitting loading of DNA polymerase. After initiation quickly degrades to an ADP-DnaA complex that is not apt for DNA replication. Binds acidic phospholipids. Strand separation requires the DnaA boxes and adjacent DnaA-trio motifs but works equally well with ADP or ATP. The protein is Chromosomal replication initiator protein DnaA of Deinococcus radiodurans (strain ATCC 13939 / DSM 20539 / JCM 16871 / CCUG 27074 / LMG 4051 / NBRC 15346 / NCIMB 9279 / VKM B-1422 / R1).